Here is a 962-residue protein sequence, read N- to C-terminus: Phenylalanine--tRNA ligase beta subunit (962 aa).

Residues 85–201 (TIRWCKVRVC…AEVFQGDELS (117 aa)) form the tRNA-binding domain. Residues 456 to 538 (TQQSPILLST…RVIGFNRIPS (83 aa)) enclose the B5 domain. 4 residues coordinate Mg(2+): D516, D522, E525, and E526. The segment at 621 to 675 (PDSTHNPDSGSDPIIPTGVTRITEPGSSGVSGPGNVGVKEKCSADTSIEHAPTTR) is insert. The FDX-ACB domain maps to 870–961 (PTSPAATQHL…ASSKFGAIMR (92 aa)).

It belongs to the phenylalanyl-tRNA synthetase beta subunit family. Type 1 subfamily. Tetramer of two alpha and two beta subunits. Mg(2+) serves as cofactor.

Its subcellular location is the cytoplasm. The enzyme catalyses tRNA(Phe) + L-phenylalanine + ATP = L-phenylalanyl-tRNA(Phe) + AMP + diphosphate + H(+). The chain is Phenylalanine--tRNA ligase beta subunit from Tropheryma whipplei (strain Twist) (Whipple's bacillus).